A 666-amino-acid chain; its full sequence is Probable potassium transport system protein Kup (666 aa).

12 helical membrane-spanning segments follow: residues 16–36, 58–78, 100–120, 149–169, 173–193, 221–241, 253–273, 294–314, 343–363, 373–393, 399–419, and 424–444; these read GFIIALGIVYGDIGTSPLYTM, ISLIIWTLTLITTIKYVLIAL, PWLIVPAMIGGATLLSDGALT, IITTLVILIVLFGIQRFGTGF, IFGPVMFIWFSFLGVSGFFNM, IFILGSIFLATTGAEALYSDL, WPFVKMCIVLSYCGQAAWILA, VYLVSLATLAAIIASQALISG, LYIPVINWILFAVTSCTVLAF, YGLAITITMLMTTILLKYYLI, PILAHLVMAFFALVEFIFFLA, and FMHGGYAVVILALAIVFVMFI.

Belongs to the HAK/KUP transporter (TC 2.A.72) family.

It is found in the cell membrane. The enzyme catalyses K(+)(in) + H(+)(in) = K(+)(out) + H(+)(out). In terms of biological role, transport of potassium into the cell. Likely operates as a K(+):H(+) symporter. The chain is Probable potassium transport system protein Kup from Streptococcus pyogenes serotype M3 (strain ATCC BAA-595 / MGAS315).